A 258-amino-acid chain; its full sequence is Deoxyribose-phosphate aldolase (258 aa).

Asp-101 acts as the Proton donor/acceptor in catalysis. The active-site Schiff-base intermediate with acetaldehyde is Lys-166. Lys-200 acts as the Proton donor/acceptor in catalysis.

It belongs to the DeoC/FbaB aldolase family. DeoC type 2 subfamily.

The protein resides in the cytoplasm. It catalyses the reaction 2-deoxy-D-ribose 5-phosphate = D-glyceraldehyde 3-phosphate + acetaldehyde. It participates in carbohydrate degradation; 2-deoxy-D-ribose 1-phosphate degradation; D-glyceraldehyde 3-phosphate and acetaldehyde from 2-deoxy-alpha-D-ribose 1-phosphate: step 2/2. Functionally, catalyzes a reversible aldol reaction between acetaldehyde and D-glyceraldehyde 3-phosphate to generate 2-deoxy-D-ribose 5-phosphate. The chain is Deoxyribose-phosphate aldolase from Actinobacillus pleuropneumoniae serotype 3 (strain JL03).